The sequence spans 373 residues: MGSRLSLDGSVRVVVVGGGFGGTAAASLLKSWAVPFVLVDVRDAFHHNVAALRAAVESGFAKKTFISYSVTFGDSFRQGKVVAIDPGRQQVVLSDGEELHYSHLILATGSDGPFPGKFNQVIDMESAIQTYEDMVKEIEKSQRILVVGGGAAGVEMAAEIKTEYPGKEIILIHSKTALADVELLPSVRQVVKEILLRKGVRLLLSEKVSDIENLRPNQFQKDMVVRTEKGTEVVVDMVVLCTGIKINSSAYAAAFGDKMASDGALKVNKHLQLEGYENIYAIGDCADLKEPKMAYHAGLHANVVVTNIINSLTQKPLKTYEPGSLTFLLSMGRNDGVGQVNGYYVGRLLVTIAKSRDLFVSKSWRTMGQTMPS.

Residue Gly2 is the site of N-myristoyl glycine attachment. A helical membrane pass occupies residues 13–29; the sequence is VVVVGGGFGGTAAASLL. 6-hydroxy-FAD is bound by residues 17–21, Arg53, and Val81; that span reads GGGFG. An N6-acetyllysine modification is found at Lys167. Asp284 serves as a coordination point for 6-hydroxy-FAD.

This sequence belongs to the FAD-dependent oxidoreductase family. The cofactor is 6-hydroxy-FAD. Post-translationally, N-myristoylation at Gly-2 mediates the recruitment to lipid droplets and plasma membrane. In terms of processing, acetylation at Lys-167 prevents AIFM2 ubiquitination and degradation, thereby inhibiting ferroptosis. KAT2B mediates acetylation at Lys-167, while HDAC3 removes it. Ubiquitinated. AIFM2 undergoes 'Lys-29'-ubiquitination and proteasomal degradation, which is inhibited by acetylation at Lys-167.

The protein resides in the lipid droplet. It localises to the cell membrane. The protein localises to the cytoplasm. Its subcellular location is the mitochondrion membrane. It is found in the nucleus. It catalyses the reaction ubiquinone-10 + NADH + H(+) = ubiquinol-10 + NAD(+). The catalysed reaction is phylloquinone + NADH + H(+) = phylloquinol + NAD(+). The enzyme catalyses menaquinone-4 + NADH + H(+) = menaquinol-4 + NAD(+). It carries out the reaction menadione + NADH + H(+) = menadiol + NAD(+). The modification by 4-hydroxy-2-nonenal (HNE) adduction in mitochondria results in loss of the oxidoreductase activity and activation of a novel function in mitochondrial oxidative stress signaling. Its function is as follows. An NAD(P)H-dependent oxidoreductase that acts as a key inhibitor of ferroptosis. At the plasma membrane, catalyzes reduction of coenzyme Q/ubiquinone-10 to ubiquinol-10, a lipophilic radical-trapping antioxidant that prevents lipid oxidative damage and consequently ferroptosis. Acts in parallel to GPX4 to suppress phospholipid peroxidation and ferroptosis. This anti-ferroptotic function is independent of cellular glutathione levels. Also acts as a potent radical-trapping antioxidant by mediating warfarin-resistant vitamin K reduction in the canonical vitamin K cycle: catalyzes NAD(P)H-dependent reduction of vitamin K (phylloquinone, menaquinone-4 and menadione) to hydroquinone forms. Hydroquinones act as potent radical-trapping antioxidants inhibitor of phospholipid peroxidation and ferroptosis. May play a role in mitochondrial stress signaling. Upon oxidative stress, associates with the lipid peroxidation end product 4-hydroxy-2-nonenal (HNE) forming a lipid adduct devoid of oxidoreductase activity, which then translocates from mitochondria into the nucleus triggering DNA damage and cell death. This Taeniopygia guttata (Zebra finch) protein is Ferroptosis suppressor protein 1 (AIFM2).